The following is a 732-amino-acid chain: MAWSGNKAAVVLCVDVGVAMGNSFPGEESPIEQAKKVMTMFVQRQVFSESKDEIALVLYGTDGTDNALAGKDQYQNITVCRHLMLPDFDLLEDIGNKIQPSSQQADFLDALIVCMDLIQRETIGKKFGKKHIEVFTDLSSPFSQDQLDVIICNLKKSGISLQFFLPFPIDKNGEPGERGDLDSGLDHLKPSFPQKGLTEQQKEGIRMVTRVMLSLEGEDGLDEIYSFSESLRQLCVFKKIERRSMPWPCQLTIGPNLSIKIVAYKSIVQEKFKKSWVVVDARTLKKEDIQKETVYCLNDDDETEVSKEDTIQGYRYGSDIIPFSKVDEEQMKYKSEGKCFSVLGFCKSSQVHRRFFMGHQVLKVFAAKDDEAAAVALSSLVHALDELNMVAIVRYAYDKRSNPQVGVAFPYIKDAYECLVYVQLPFMEDLRQYMFSSLKNNKKCTPTEAQLSAIDDLIDSMSLVKKNEEEDIVEDLFPTSKIPNPEFQRLYQCLLHRALHLQERLPPIQQHILNMLDPPTEMKAKCESPLSKVKTLFPLTEVIKKKNQVTAQDVFQDNHEEGPAAKKYKTEKEEDHISISSLAEGNITKVGSVNPVENFRFLVRQKIASFEEASLQLISHIEQFLDTNETLYFMKSMDCIKAFREEAIQFSEEQRFNSFLEALREKVEIKQLNHFWEIVVQDGVTLITKDEGPGSSITAEEATKFLAPKDKAKEDTTGPEEAGDVDDLLDMI.

Positions 9–161 (AVVLCVDVGV…CNLKKSGISL (153 aa)) constitute a VWFA domain. The leucine-zipper stretch occupies residues 138 to 165 (LSSPFSQDQLDVIICNLKKSGISLQFFL). Lys195 participates in a covalent cross-link: Glycyl lysine isopeptide (Lys-Gly) (interchain with G-Cter in SUMO2). The Ku domain maps to 253 to 453 (IGPNLSIKIV…CTPTEAQLSA (201 aa)). At Ser258 the chain carries Phosphoserine. At Lys265 the chain carries N6-acetyllysine. Phosphoserine is present on Ser318. Lys332 is modified (N6-acetyllysine). Glycyl lysine isopeptide (Lys-Gly) (interchain with G-Cter in SUMO2) cross-links involve residues Lys532 and Lys534. Thr535 is subject to Phosphothreonine. Residues Lys567 and Lys569 each participate in a glycyl lysine isopeptide (Lys-Gly) (interchain with G-Cter in SUMO2) cross-link. Residues Ser578, Ser580, and Ser581 each carry the phosphoserine; by PRKDC modification. N6-acetyllysine is present on Lys666. Residues Lys670 and Lys689 each participate in a glycyl lysine isopeptide (Lys-Gly) (interchain with G-Cter in SUMO2) cross-link. Residues 708–732 (PKDKAKEDTTGPEEAGDVDDLLDMI) are disordered. The residue at position 716 (Thr716) is a Phosphothreonine; by PRKDC. Residues 717 to 732 (TGPEEAGDVDDLLDMI) show a composition bias toward acidic residues. The short motif at 720–728 (EEAGDVDDL) is the EEXXXDL motif element.

It belongs to the ku80 family. Heterodimer composed of XRCC5/Ku80 and XRCC6/Ku70. Component of the core long-range non-homologous end joining (NHEJ) complex (also named DNA-PK complex) composed of PRKDC, LIG4, XRCC4, XRCC6/Ku70, XRCC5/Ku86 and NHEJ1/XLF. Additional component of the NHEJ complex includes PAXX. Following autophosphorylation, PRKDC dissociates from DNA, leading to formation of the short-range NHEJ complex, composed of LIG4, XRCC4, XRCC6/Ku70, XRCC5/Ku86 and NHEJ1/XLF. The XRCC5-XRCC6 dimer also associates with NAA15, and this complex displays DNA binding activity towards the osteocalcin FGF response element (OCFRE). In addition, XRCC5 binds to the osteoblast-specific transcription factors MSX2 and RUNX2. Interacts with ELF3. Interacts with APLF (via KBM motif). The XRCC5/XRCC6 dimer associates in a DNA-dependent manner with APEX1. Identified in a complex with DEAF1 and XRCC6. Interacts with NR4A3; the DNA-dependent protein kinase complex DNA-PK phosphorylates and activates NR4A3 and prevents NR4A3 ubiquitinylation and degradation. Interacts with RNF138. Interacts with CYREN (via KBM motif). Interacts with WRN (via KBM motif). Interacts (via N-terminus) with HSF1 (via N-terminus); this interaction is direct and prevents XRCC5/XRCC6 heterodimeric binding and non-homologous end joining (NHEJ) repair activities induced by ionizing radiation (IR). Interacts with DHX9; this interaction occurs in a RNA-dependent manner. Part of the HDP-RNP complex composed of at least HEXIM1, PRKDC, XRCC5, XRCC6, paraspeckle proteins (SFPQ, NONO, PSPC1, RBM14, and MATR3) and NEAT1 RNA. Interacts with ERCC6. Interacts with ATF7. The XRCC5-XRCC6 dimer associates with ALKBH2. Interacts with TPRN; TPRN interacts with a number of DNA damage response proteins, is recruited to sites of DNA damage and may play a role in DNA damage repair. Interacts with ERCC6L2. Post-translationally, ADP-ribosylated by PARP3. Phosphorylated on serine residues. Phosphorylation by PRKDC may enhance helicase activity. In terms of processing, sumoylated. Post-translationally, ubiquitinated by RNF8 via 'Lys-48'-linked ubiquitination following DNA damage, leading to its degradation and removal from DNA damage sites. Ubiquitinated by RNF138, leading to remove the Ku complex from DNA breaks.

It localises to the nucleus. The protein localises to the nucleolus. It is found in the chromosome. Single-stranded DNA-dependent ATP-dependent helicase that plays a key role in DNA non-homologous end joining (NHEJ) by recruiting DNA-PK to DNA. Required for double-strand break repair and V(D)J recombination. Also has a role in chromosome translocation. The DNA helicase II complex binds preferentially to fork-like ends of double-stranded DNA in a cell cycle-dependent manner. It works in the 3'-5' direction. During NHEJ, the XRCC5-XRRC6 dimer performs the recognition step: it recognizes and binds to the broken ends of the DNA and protects them from further resection. Binding to DNA may be mediated by XRCC6. The XRCC5-XRRC6 dimer acts as a regulatory subunit of the DNA-dependent protein kinase complex DNA-PK by increasing the affinity of the catalytic subunit PRKDC to DNA by 100-fold. The XRCC5-XRRC6 dimer is probably involved in stabilizing broken DNA ends and bringing them together. The assembly of the DNA-PK complex to DNA ends is required for the NHEJ ligation step. The XRCC5-XRRC6 dimer probably also acts as a 5'-deoxyribose-5-phosphate lyase (5'-dRP lyase), by catalyzing the beta-elimination of the 5' deoxyribose-5-phosphate at an abasic site near double-strand breaks. XRCC5 probably acts as the catalytic subunit of 5'-dRP activity, and allows to 'clean' the termini of abasic sites, a class of nucleotide damage commonly associated with strand breaks, before such broken ends can be joined. The XRCC5-XRRC6 dimer together with APEX1 acts as a negative regulator of transcription. In association with NAA15, the XRCC5-XRRC6 dimer binds to the osteocalcin promoter and activates osteocalcin expression. As part of the DNA-PK complex, involved in the early steps of ribosome assembly by promoting the processing of precursor rRNA into mature 18S rRNA in the small-subunit processome. Binding to U3 small nucleolar RNA, recruits PRKDC and XRCC5/Ku86 to the small-subunit processome. Plays a role in the regulation of DNA virus-mediated innate immune response by assembling into the HDP-RNP complex, a complex that serves as a platform for IRF3 phosphorylation and subsequent innate immune response activation through the cGAS-STING pathway. This Mus musculus (Mouse) protein is X-ray repair cross-complementing protein 5 (Xrcc5).